The sequence spans 353 residues: UDP-3-O-acylglucosamine N-acyltransferase (353 aa).

The active-site Proton acceptor is His-242.

Belongs to the transferase hexapeptide repeat family. LpxD subfamily. Homotrimer.

The enzyme catalyses a UDP-3-O-[(3R)-3-hydroxyacyl]-alpha-D-glucosamine + a (3R)-hydroxyacyl-[ACP] = a UDP-2-N,3-O-bis[(3R)-3-hydroxyacyl]-alpha-D-glucosamine + holo-[ACP] + H(+). It participates in bacterial outer membrane biogenesis; LPS lipid A biosynthesis. Functionally, catalyzes the N-acylation of UDP-3-O-acylglucosamine using 3-hydroxyacyl-ACP as the acyl donor. Is involved in the biosynthesis of lipid A, a phosphorylated glycolipid that anchors the lipopolysaccharide to the outer membrane of the cell. In Pseudomonas aeruginosa (strain UCBPP-PA14), this protein is UDP-3-O-acylglucosamine N-acyltransferase.